Here is a 313-residue protein sequence, read N- to C-terminus: 4-diphosphocytidyl-2-C-methyl-D-erythritol kinase (313 aa).

Residue K10 is part of the active site. 95–105 (PVTAGLGGGSS) contributes to the ATP binding site. Residue D136 is part of the active site. Positions 289–313 (HPRVSPWRSPRSASSPSTRRSSRPT) are disordered. Over residues 292 to 307 (VSPWRSPRSASSPSTR) the composition is skewed to low complexity.

The protein belongs to the GHMP kinase family. IspE subfamily.

It carries out the reaction 4-CDP-2-C-methyl-D-erythritol + ATP = 4-CDP-2-C-methyl-D-erythritol 2-phosphate + ADP + H(+). The protein operates within isoprenoid biosynthesis; isopentenyl diphosphate biosynthesis via DXP pathway; isopentenyl diphosphate from 1-deoxy-D-xylulose 5-phosphate: step 3/6. Its function is as follows. Catalyzes the phosphorylation of the position 2 hydroxy group of 4-diphosphocytidyl-2C-methyl-D-erythritol. The polypeptide is 4-diphosphocytidyl-2-C-methyl-D-erythritol kinase (Anaeromyxobacter dehalogenans (strain 2CP-C)).